Here is a 509-residue protein sequence, read N- to C-terminus: Taxoid 14-beta-hydroxylase (509 aa).

The next 3 helical transmembrane spans lie at 20–40 (AILFIVLSAVAGIVLPLLLFL), 186–206 (SVVALVGDLVFDISACLFFNI), and 218–238 (LLEIIAVGVLAVPVDLPGFAY). Cys-443 provides a ligand contact to heme.

It belongs to the cytochrome P450 family.

The protein localises to the microsome membrane. It catalyses the reaction 10beta-hydroxytaxa-4(20),11-dien-5alpha-yl acetate + NADPH + O2 + H(+) = 10beta,14beta-dihydroxytaxa-4(20),11-dien-5alpha-yl acetate + NADP(+) + H2O. Its pathway is alkaloid biosynthesis; taxol biosynthesis. Its function is as follows. Catalyzes the conversion of 5-alpha-acetoxy-10beta-ol to 5-alpha-acetoxy-10beta,14beta-dihydroxy taxadiene. Also acts on taxa-4(20),11-dien-5-alpha-yl acetate. This Taxus cuspidata (Japanese yew) protein is Taxoid 14-beta-hydroxylase.